The primary structure comprises 485 residues: Glutamate--tRNA ligase (485 aa).

A 'HIGH' region motif is present at residues 11–21 (PSPTGHLHIGG). The 'KMSKS' region motif lies at 252–256 (KMSKR). Lys-255 contributes to the ATP binding site.

Belongs to the class-I aminoacyl-tRNA synthetase family. Glutamate--tRNA ligase type 1 subfamily. As to quaternary structure, monomer.

It is found in the cytoplasm. The enzyme catalyses tRNA(Glu) + L-glutamate + ATP = L-glutamyl-tRNA(Glu) + AMP + diphosphate. Catalyzes the attachment of glutamate to tRNA(Glu) in a two-step reaction: glutamate is first activated by ATP to form Glu-AMP and then transferred to the acceptor end of tRNA(Glu). The protein is Glutamate--tRNA ligase of Halalkalibacterium halodurans (strain ATCC BAA-125 / DSM 18197 / FERM 7344 / JCM 9153 / C-125) (Bacillus halodurans).